We begin with the raw amino-acid sequence, 556 residues long: F-box protein YDR131C (556 aa).

Residues 1–44 form the F-box domain; the sequence is MFDKLPYEIFKQIAWRIPQEDKISLTYVCKRSYESIIPFIYQNL.

As to quaternary structure, interacts with SKP1. Component of the probable SCF(YDR131C) complex containing CDC53, SKP1, RBX1 and YDR131C.

The protein resides in the vacuole. It participates in protein modification; protein ubiquitination. In terms of biological role, substrate recognition component of a SCF (SKP1-CUL1-F-box protein) E3 ubiquitin-protein ligase complex which mediates the ubiquitination and subsequent proteasomal degradation of target proteins. Probably recognizes and binds to phosphorylated target proteins. The chain is F-box protein YDR131C from Saccharomyces cerevisiae (strain ATCC 204508 / S288c) (Baker's yeast).